We begin with the raw amino-acid sequence, 185 residues long: Ribosome-recycling factor (185 aa).

This sequence belongs to the RRF family.

Its subcellular location is the cytoplasm. Functionally, responsible for the release of ribosomes from messenger RNA at the termination of protein biosynthesis. May increase the efficiency of translation by recycling ribosomes from one round of translation to another. This is Ribosome-recycling factor from Shewanella sediminis (strain HAW-EB3).